A 610-amino-acid chain; its full sequence is Zinc metalloproteinase-disintegrin-like brevilysin H6 (610 aa).

Residues 1 to 20 form the signal peptide; that stretch reads MIQVLLVTICLAAFPYQGSS. Residues 21–191 constitute a propeptide that is removed on maturation; the sequence is IILESGNVND…ASQLNLTPEQ (171 aa). Residue Q192 is modified to Pyrrolidone carboxylic acid. The Peptidase M12B domain occupies 198 to 394; it reads RFVELVLVAD…HNPECIVNEP (197 aa). The Ca(2+) site is built by E201 and D285. 4 disulfide bridges follow: C309–C389, C349–C373, C351–C356, and C373–C378. H334 serves as a coordination point for Zn(2+). E335 is an active-site residue. Positions 338 and 344 each coordinate Zn(2+). An N-linked (GlcNAc...) asparagine glycan is attached at N372. Ca(2+) is bound by residues C389, N392, V404, N407, L409, E411, E414, and D417. Residues 402-488 enclose the Disintegrin domain; that stretch reads PPVCGNELLE…ECPADVFHKN (87 aa). Cystine bridges form between C405–C424, C405–C434, C416–C429, C416–C434, C418–C424, C428–C451, C442–C448, C447–C473, C460–C480, C467–C492, C467–C499, C492–C504, C499–C504, C511–C526, C511–C561, C526–C572, C539–C549, C549–C556, C556–C598, C561–C572, C592–C603, and C598–C603. The short motif at 466-468 is the D/ECD-tripeptide element; that stretch reads ECD. The Ca(2+) site is built by D468, P469, E471, D483, and V484.

It belongs to the venom metalloproteinase (M12B) family. P-III subfamily. P-IIIb sub-subfamily. Monomer. Requires Zn(2+) as cofactor. In the absence of calcium ions, is autocatalytically degraded giving 29 (p29K) and 45 kDa (p45K) fragments. In presence of calcium ions, the p45K is not detected. As to expression, expressed by the venom gland.

It localises to the secreted. With respect to regulation, inhibited by chelating agents. Calcium ions enhance its activity, they also suppress autoproteolysis, and contribute to the stability of the enzyme against pH, heating, urea and cysteine. Functionally, shows weak hemorrhagic activity. Rapidly degrades the alpha-chain of fibrinogen (FGA). The polypeptide is Zinc metalloproteinase-disintegrin-like brevilysin H6 (Gloydius brevicauda (Korean slamosa snake)).